The chain runs to 147 residues: Lysozyme C-3 (147 aa).

The N-terminal stretch at 1 to 18 (MKALVILGLLFLSVAVQG) is a signal peptide. The C-type lysozyme domain maps to 19 to 147 (KVFERCELAR…VSSYVEGCKL (129 aa)). Intrachain disulfides connect Cys24-Cys145, Cys48-Cys133, Cys83-Cys99, and Cys95-Cys113. Active-site residues include Glu53 and Asp71.

This sequence belongs to the glycosyl hydrolase 22 family. Monomer. As to expression, expressed in stomach.

The protein resides in the secreted. The catalysed reaction is Hydrolysis of (1-&gt;4)-beta-linkages between N-acetylmuramic acid and N-acetyl-D-glucosamine residues in a peptidoglycan and between N-acetyl-D-glucosamine residues in chitodextrins.. Lysozymes have primarily a bacteriolytic function; those in tissues and body fluids are associated with the monocyte-macrophage system and enhance the activity of immunoagents. This is Lysozyme C-3 from Ovis aries (Sheep).